The sequence spans 221 residues: Deoxyribose-phosphate aldolase (221 aa).

Residue Asp-90 is the Proton donor/acceptor of the active site. Lys-152 serves as the catalytic Schiff-base intermediate with acetaldehyde. Catalysis depends on Lys-181, which acts as the Proton donor/acceptor.

It belongs to the DeoC/FbaB aldolase family. DeoC type 1 subfamily.

It is found in the cytoplasm. The enzyme catalyses 2-deoxy-D-ribose 5-phosphate = D-glyceraldehyde 3-phosphate + acetaldehyde. It functions in the pathway carbohydrate degradation; 2-deoxy-D-ribose 1-phosphate degradation; D-glyceraldehyde 3-phosphate and acetaldehyde from 2-deoxy-alpha-D-ribose 1-phosphate: step 2/2. In terms of biological role, catalyzes a reversible aldol reaction between acetaldehyde and D-glyceraldehyde 3-phosphate to generate 2-deoxy-D-ribose 5-phosphate. This is Deoxyribose-phosphate aldolase from Exiguobacterium sibiricum (strain DSM 17290 / CCUG 55495 / CIP 109462 / JCM 13490 / 255-15).